Consider the following 407-residue polypeptide: Probable tRNA sulfurtransferase (407 aa).

A THUMP domain is found at asparagine 61–valine 165. ATP-binding positions include methionine 183–leucine 184, histidine 208–phenylalanine 209, arginine 265, glycine 287, and glutamine 296.

This sequence belongs to the ThiI family.

The protein resides in the cytoplasm. The enzyme catalyses [ThiI sulfur-carrier protein]-S-sulfanyl-L-cysteine + a uridine in tRNA + 2 reduced [2Fe-2S]-[ferredoxin] + ATP + H(+) = [ThiI sulfur-carrier protein]-L-cysteine + a 4-thiouridine in tRNA + 2 oxidized [2Fe-2S]-[ferredoxin] + AMP + diphosphate. It carries out the reaction [ThiS sulfur-carrier protein]-C-terminal Gly-Gly-AMP + S-sulfanyl-L-cysteinyl-[cysteine desulfurase] + AH2 = [ThiS sulfur-carrier protein]-C-terminal-Gly-aminoethanethioate + L-cysteinyl-[cysteine desulfurase] + A + AMP + 2 H(+). The protein operates within cofactor biosynthesis; thiamine diphosphate biosynthesis. Catalyzes the ATP-dependent transfer of a sulfur to tRNA to produce 4-thiouridine in position 8 of tRNAs, which functions as a near-UV photosensor. Also catalyzes the transfer of sulfur to the sulfur carrier protein ThiS, forming ThiS-thiocarboxylate. This is a step in the synthesis of thiazole, in the thiamine biosynthesis pathway. The sulfur is donated as persulfide by IscS. In Staphylococcus aureus (strain JH1), this protein is Probable tRNA sulfurtransferase.